Here is a 152-residue protein sequence, read N- to C-terminus: Transcriptional regulator MraZ (152 aa).

2 SpoVT-AbrB domains span residues 5 to 52 (ASAI…PVQE) and 81 to 124 (AHEC…DEAA).

The protein belongs to the MraZ family. In terms of assembly, forms oligomers.

The protein resides in the cytoplasm. It is found in the nucleoid. The chain is Transcriptional regulator MraZ from Shewanella piezotolerans (strain WP3 / JCM 13877).